The following is a 562-amino-acid chain: Long-chain-fatty-acid--CoA ligase (562 aa).

213 to 224 lines the ATP pocket; that stretch reads YTGGTTGVAKGA.

The protein belongs to the ATP-dependent AMP-binding enzyme family. Mg(2+) serves as cofactor.

It localises to the membrane. The enzyme catalyses a long-chain fatty acid + ATP + CoA = a long-chain fatty acyl-CoA + AMP + diphosphate. It functions in the pathway lipid metabolism; fatty acid beta-oxidation. In terms of biological role, catalyzes the esterification, concomitant with transport, of exogenous long-chain fatty acids into metabolically active CoA thioesters for subsequent degradation or incorporation into phospholipids. The polypeptide is Long-chain-fatty-acid--CoA ligase (fadD) (Yersinia pestis).